The sequence spans 241 residues: Carboxy-S-adenosyl-L-methionine synthase (241 aa).

Residues Tyr-38, 63–65 (GCS), 88–89 (DN), 116–117 (DI), Asn-131, and Arg-198 contribute to the S-adenosyl-L-methionine site.

It belongs to the class I-like SAM-binding methyltransferase superfamily. Cx-SAM synthase family. Homodimer.

The enzyme catalyses prephenate + S-adenosyl-L-methionine = carboxy-S-adenosyl-L-methionine + 3-phenylpyruvate + H2O. Catalyzes the conversion of S-adenosyl-L-methionine (SAM) to carboxy-S-adenosyl-L-methionine (Cx-SAM). This is Carboxy-S-adenosyl-L-methionine synthase from Glaesserella parasuis serovar 5 (strain SH0165) (Haemophilus parasuis).